Reading from the N-terminus, the 223-residue chain is DnaJ homolog subfamily B member 9 (223 aa).

Residues methionine 1 to alanine 23 form the signal peptide. Residues serine 26 to glycine 90 enclose the J domain. The divergent targeting domain stretch occupies residues histidine 91–glutamine 223. Serine 133 is subject to Phosphoserine.

As to quaternary structure, interacts with HSPA5/BiP; interaction is direct. Interacts with ERN1/IRE1 (via the luminal region). Interacts with DERL1.

It localises to the endoplasmic reticulum lumen. Functionally, co-chaperone for Hsp70 protein HSPA5/BiP that acts as a key repressor of the ERN1/IRE1-mediated unfolded protein response (UPR). J domain-containing co-chaperones stimulate the ATPase activity of Hsp70 proteins and are required for efficient substrate recognition by Hsp70 proteins. In the unstressed endoplasmic reticulum, interacts with the luminal region of ERN1/IRE1 and selectively recruits HSPA5/BiP: HSPA5/BiP disrupts the dimerization of the active ERN1/IRE1 luminal region, thereby inactivating ERN1/IRE1. Also involved in endoplasmic reticulum-associated degradation (ERAD) of misfolded proteins. Required for survival of B-cell progenitors and normal antibody production. This chain is DnaJ homolog subfamily B member 9, found in Pongo abelii (Sumatran orangutan).